A 263-amino-acid chain; its full sequence is Hydroxyacylglutathione hydrolase (263 aa).

Residues His-56, His-58, Asp-60, His-61, His-115, Asp-135, and His-175 each contribute to the Zn(2+) site.

Belongs to the metallo-beta-lactamase superfamily. Glyoxalase II family. In terms of assembly, monomer. It depends on Zn(2+) as a cofactor.

It carries out the reaction an S-(2-hydroxyacyl)glutathione + H2O = a 2-hydroxy carboxylate + glutathione + H(+). The protein operates within secondary metabolite metabolism; methylglyoxal degradation; (R)-lactate from methylglyoxal: step 2/2. In terms of biological role, thiolesterase that catalyzes the hydrolysis of S-D-lactoyl-glutathione to form glutathione and D-lactic acid. The sequence is that of Hydroxyacylglutathione hydrolase from Nitrosococcus oceani (strain ATCC 19707 / BCRC 17464 / JCM 30415 / NCIMB 11848 / C-107).